Reading from the N-terminus, the 127-residue chain is Transcription antitermination protein NusB (127 aa).

This sequence belongs to the NusB family.

Involved in transcription antitermination. Required for transcription of ribosomal RNA (rRNA) genes. Binds specifically to the boxA antiterminator sequence of the ribosomal RNA (rrn) operons. In Lysinibacillus sphaericus (strain C3-41), this protein is Transcription antitermination protein NusB.